The following is a 246-amino-acid chain: MADEMETKGEKKYKYSIIIPTYNERLNIAIIVYLIFKHLRDVDFEIIVVDDGSPDGTQEIVKQLQQLYGEDRILLRARAKKLGLGTAYIHGLKHATGDFVVIMDADLSHHPKYLPSFIKKQLETNASIVTGTRYVKGGGVHGWNLMRKLTSRGANVLAQTLLWPGVSDLTGSFRLYKKSALEDVISSCVSKGYVFQMEMIVRATRKGYHIEEVPITFVDRVFGTSKLGGSEIVEYLKGLVYLLLTT.

Residues proline 20, tyrosine 22, glutamate 24, valine 49, aspartate 51, aspartate 104, alanine 105, aspartate 106, arginine 133, arginine 220, and lysine 226 each contribute to the GDP-alpha-D-mannose site. Aspartate 106 is a Mg(2+) binding site. Aspartate 106 contacts Mn(2+).

This sequence belongs to the glycosyltransferase 2 family. Component of the dolichol-phosphate mannose (DPM) synthase complex composed of DPMS1, DPMS2 and DPMS3; in the complex interacts directly with DPMS3. It depends on Mg(2+) as a cofactor. Mn(2+) is required as a cofactor. Requires Ca(2+) as cofactor.

Its subcellular location is the endoplasmic reticulum membrane. It catalyses the reaction a di-trans,poly-cis-dolichyl phosphate + GDP-alpha-D-mannose = a di-trans,poly-cis-dolichyl beta-D-mannosyl phosphate + GDP. It functions in the pathway protein modification; protein glycosylation. In terms of biological role, transfers mannose from GDP-mannose to dolichol monophosphate to form dolichol phosphate mannose (Dol-P-Man) which is the mannosyl donor in pathways leading to N-glycosylation, glycosyl phosphatidylinositol membrane anchoring, and O-mannosylation of proteins; catalytic subunit of the dolichol-phosphate mannose (DPM) synthase complex. Plays a role in plant development and physiology, sensitivity to ammonium stress and endoplasmic reticulum stress response. In Arabidopsis thaliana (Mouse-ear cress), this protein is Dolichol-phosphate mannosyltransferase subunit 1.